A 184-amino-acid chain; its full sequence is Probable N-acetyltransferase san (184 aa).

The 150-residue stretch at Ile-6–Arg-155 folds into the N-acetyltransferase domain. Tyr-31 is a binding site for substrate. Residue Lys-47 is modified to N6-acetyllysine; by autocatalysis. The active site involves Tyr-73. Met-75 serves as a coordination point for substrate. Leu-77 to Thr-90 provides a ligand contact to acetyl-CoA. His-112 is a catalytic residue. A CoA-binding site is contributed by Asn-117–Lys-126. The segment at Tyr-138 to Arg-141 is substrate. A compositionally biased stretch (low complexity) spans Thr-157–Ser-174. Residues Thr-157–Ser-176 are disordered.

The protein belongs to the acetyltransferase family. As to quaternary structure, component of an acetyltransferase complex, at least composed of san, Ard1 and Nat1. Post-translationally, autoacetylated.

The protein localises to the cytoplasm. It catalyses the reaction N-terminal L-methionyl-L-alanyl-[protein] + acetyl-CoA = N-terminal N(alpha)-acetyl-L-methionyl-L-alanyl-[protein] + CoA + H(+). The enzyme catalyses N-terminal L-methionyl-L-seryl-[protein] + acetyl-CoA = N-terminal N(alpha)-acetyl-L-methionyl-L-seryl-[protein] + CoA + H(+). The catalysed reaction is N-terminal L-methionyl-L-valyl-[protein] + acetyl-CoA = N-terminal N(alpha)-acetyl-L-methionyl-L-valyl-[protein] + CoA + H(+). It carries out the reaction N-terminal L-methionyl-L-threonyl-[protein] + acetyl-CoA = N-terminal N(alpha)-acetyl-L-methionyl-L-threonyl-[protein] + CoA + H(+). It catalyses the reaction N-terminal L-methionyl-L-lysyl-[protein] + acetyl-CoA = N-terminal N(alpha)-acetyl-L-methionyl-L-lysyl-[protein] + CoA + H(+). The enzyme catalyses N-terminal L-methionyl-L-leucyl-[protein] + acetyl-CoA = N-terminal N(alpha)-acetyl-L-methionyl-L-leucyl-[protein] + CoA + H(+). The catalysed reaction is N-terminal L-methionyl-L-phenylalanyl-[protein] + acetyl-CoA = N-terminal N(alpha)-acetyl-L-methionyl-L-phenylalanyl-[protein] + CoA + H(+). It carries out the reaction N-terminal L-methionyl-L-tyrosyl-[protein] + acetyl-CoA = N-terminal N(alpha)-acetyl-L-methionyl-L-tyrosyl-[protein] + CoA + H(+). N-alpha-acetyltransferase that acetylates the N-terminus of proteins that retain their initiating methionine. Has a broad substrate specificity: able to acetylate the initiator methionine of most peptides. Also displays N-epsilon-acetyltransferase activity by mediating acetylation of the side chain of specific lysines on proteins. Autoacetylates. Required for the establishment of sister chromatid cohesion and couple the processes of cohesion and DNA replication to ensure that only sister chromatids become paired together. Required for the interaction between Scc1/vtd and SMC3, possibly by mediating N-terminal acetylation of Scc1/vtd. In terms of biological role, (Microbial infection) Required for optimal replication of E.chaffeensis in the immune tissues, hemocytes, and fat body. This is Probable N-acetyltransferase san (san) from Drosophila melanogaster (Fruit fly).